Here is a 607-residue protein sequence, read N- to C-terminus: 2-isopropylmalate synthase (607 aa).

The segment covering 1–10 (MASFSESLSQ) has biased composition (polar residues). A disordered region spans residues 1–40 (MASFSESLSQDPADAYKSAPSITKPMGPPSPGQPQWNPQR). Residues 75–349 (PLWCAVDLRD…DPQIDFSNID (275 aa)) form the Pyruvate carboxyltransferase domain. Aspartate 84, histidine 288, histidine 290, and asparagine 324 together coordinate Mg(2+). The regulatory domain stretch occupies residues 491–607 (PVQPLERIKQ…VSAVNRAMPR (117 aa)).

The protein belongs to the alpha-IPM synthase/homocitrate synthase family. LeuA type 2 subfamily. As to quaternary structure, homodimer. Requires Mg(2+) as cofactor.

It localises to the cytoplasm. The enzyme catalyses 3-methyl-2-oxobutanoate + acetyl-CoA + H2O = (2S)-2-isopropylmalate + CoA + H(+). Its pathway is amino-acid biosynthesis; L-leucine biosynthesis; L-leucine from 3-methyl-2-oxobutanoate: step 1/4. Catalyzes the condensation of the acetyl group of acetyl-CoA with 3-methyl-2-oxobutanoate (2-ketoisovalerate) to form 3-carboxy-3-hydroxy-4-methylpentanoate (2-isopropylmalate). In Mycobacterium leprae (strain TN), this protein is 2-isopropylmalate synthase.